A 259-amino-acid polypeptide reads, in one-letter code: (3R)-3-hydroxyacyl-CoA dehydrogenase (259 aa).

Residues 13-21 and 40-41 contribute to the NAD(+) site; these read LVTGAGSGI and DL. S58 bears the Phosphoserine mark. K66 carries the post-translational modification N6-acetyllysine. 72–74 contacts NAD(+); sequence ADV. Substrate is bound at residue S154. At K158 the chain carries N6-succinyllysine. Residue Y167 is the Proton acceptor of the active site. Residues 167 to 171 and 200 to 202 each bind NAD(+); these read YASSK and IAT. An N6-succinyllysine modification is found at K171.

This sequence belongs to the short-chain dehydrogenases/reductases (SDR) family. Heterotetramer with CBR4; contains two molecules of HSD17B8 and CBR4. Kidney, liver, testis, ovary and spleen. Oviduct, uterus, mammary gland, vagina, prostate, clitoral gland and moderately heart, dorsal skin, brain and lung.

It is found in the mitochondrion matrix. It carries out the reaction a (3R)-3-hydroxyacyl-CoA + NAD(+) = a 3-oxoacyl-CoA + NADH + H(+). It catalyses the reaction 17beta-estradiol + NAD(+) = estrone + NADH + H(+). The enzyme catalyses testosterone + NAD(+) = androst-4-ene-3,17-dione + NADH + H(+). The catalysed reaction is 17beta-hydroxy-5alpha-androstan-3-one + NAD(+) = 5alpha-androstan-3,17-dione + NADH + H(+). It participates in lipid metabolism; fatty acid biosynthesis. The protein operates within steroid biosynthesis; estrogen biosynthesis. Its pathway is lipid metabolism; mitochondrial fatty acid beta-oxidation. In terms of biological role, required for the solubility and assembly of the heterotetramer 3-ketoacyl-[acyl carrier protein] (ACP) reductase functional complex (KAR or KAR1) that forms part of the mitochondrial fatty acid synthase (mtFAS). Alpha-subunit of the KAR complex, acts as scaffold protein, required for the stability of carbonyl reductase type-4 (CBR4, beta-subunit of the KAR complex) and for its 3-ketoacyl-ACP reductase activity, thereby participating in mitochondrial fatty acid biosynthesis. Catalyzes the NAD-dependent conversion of (3R)-3-hydroxyacyl-CoA into 3-ketoacyl-CoA (3-oxoacyl-CoA) with no chain length preference, this enzymatic activity is not needed for the KAR function. Prefers (3R)-3-hydroxyacyl-CoA over (3S)-3-hydroxyacyl-CoA and displays enzymatic activity only in the presence of NAD(+)(H). Cooperates with enoyl-CoA hydratase 1 in mitochondria, together they constitute an alternative route to the auxiliary enzyme pathways for the breakdown of Z-PUFA (cis polyunsaturated fatty acid) enoyl-esters. NAD-dependent 17-beta-hydroxysteroid dehydrogenase with highest activity towards estradiol. It efficiently catalyzes the oxidation of estradiol (E2), testosterone, and dihydrotestosterone. Primarily an oxidative enzyme, it can switch to a reductive mode determined in the appropriate physiologic milieu and catalyze the reduction of estrone (E1) to form biologically active estradiol (E2). This is (3R)-3-hydroxyacyl-CoA dehydrogenase (Hsd17b8) from Mus musculus (Mouse).